An 846-amino-acid polypeptide reads, in one-letter code: Auxin response factor 2A (846 aa).

Polar residues predominate over residues 1 to 12; the sequence is MAASEVSIQGYS. Positions 1 to 30 are disordered; the sequence is MAASEVSIQGYSEPSDGSRPVSETGRSSSG. The segment at residues 146–248 is a DNA-binding region (TF-B3); sequence FCKTLTASDT…ELRVGVRRAM (103 aa). Disordered stretches follow at residues 380-423 and 660-693; these read PPAL…HSQA and DMNI…GVAA. Polar residues-rich tracts occupy residues 398–408 and 414–423; these read ILPTSPDSSVL and SRATADHSQA. Basic and acidic residues predominate over residues 675-693; it reads SDQRSEQSKGSKVDDGVAA. Positions 720 to 804 constitute a PB1 domain; it reads RSCTKVHKQG…RKIFIYTKEE (85 aa). Composition is skewed to polar residues over residues 809–824 and 836–846; these read NPGT…SSVA and QLPSESGQAES. A disordered region spans residues 809–846; that stretch reads NPGTLNSKGEDTSSVAEGSDAKEVKNLQLPSESGQAES.

It belongs to the ARF family. In terms of assembly, homodimers and heterodimers. Interacts with ASR1. In terms of tissue distribution, expressed in root, leaf and flower. Expressed in flower buds about three days before opening including ovary, petal and sepal with the highest in stamen. Expressed in stem. Expressed in fruit. Expressed in seeds.

The protein resides in the nucleus. Its function is as follows. Auxin response factors (ARFs) are transcriptional factors that bind specifically to the DNA sequence 5'-TGTCTC-3' found in the auxin-responsive promoter elements (AuxREs). Could act as transcriptional activator or repressor. Involved in the control of fruit ripening process. Regulates expression of a number of ripening regulators, transcription factors, and ethylene biosynthesis and signaling components. May act as a transcriptional repressor of auxin-responsive genes. Regulates vegetative growth, lateral root formation and flower organ senescence, possibly partially by regulating gene expression of auxin and ethylene response factor (ERF) genes. Plays a negative role in axillary shoot meristem formation. This is Auxin response factor 2A from Solanum lycopersicum (Tomato).